The primary structure comprises 479 residues: Ribosomal RNA small subunit methyltransferase F (479 aa).

S-adenosyl-L-methionine-binding positions include 125–131 (AAAPGSK), Glu-149, Asp-176, and Asp-194. The Nucleophile role is filled by Cys-247.

Belongs to the class I-like SAM-binding methyltransferase superfamily. RsmB/NOP family.

It localises to the cytoplasm. It catalyses the reaction cytidine(1407) in 16S rRNA + S-adenosyl-L-methionine = 5-methylcytidine(1407) in 16S rRNA + S-adenosyl-L-homocysteine + H(+). In terms of biological role, specifically methylates the cytosine at position 1407 (m5C1407) of 16S rRNA. This is Ribosomal RNA small subunit methyltransferase F from Salmonella paratyphi A (strain ATCC 9150 / SARB42).